A 155-amino-acid polypeptide reads, in one-letter code: Small ribosomal subunit protein uS7 (155 aa).

It belongs to the universal ribosomal protein uS7 family. Part of the 30S ribosomal subunit. Contacts proteins S9 and S11.

One of the primary rRNA binding proteins, it binds directly to 16S rRNA where it nucleates assembly of the head domain of the 30S subunit. Is located at the subunit interface close to the decoding center, probably blocks exit of the E-site tRNA. The chain is Small ribosomal subunit protein uS7 from Thermotoga maritima (strain ATCC 43589 / DSM 3109 / JCM 10099 / NBRC 100826 / MSB8).